The sequence spans 842 residues: Amyloid-beta A4 precursor protein-binding family A member 1 (842 aa).

Disordered regions lie at residues 1-121 (MNHL…DESA), 238-349 (RLHH…EKRD), and 366-439 (KTRT…KESR). Ser-82 is modified (phosphoserine). Composition is skewed to basic and acidic residues over residues 106-115 (DGYEAERAQD) and 240-258 (HHYD…KEAE). 6 positions are modified to phosphoserine: Ser-246, Ser-250, Ser-252, Ser-267, Ser-284, and Ser-289. Thr-309 carries the post-translational modification Phosphothreonine. 2 positions are modified to phosphoserine: Ser-317 and Ser-372. At Thr-375 the chain carries Phosphothreonine. Over residues 392-403 (PTRDCDDQRPVD) the composition is skewed to basic and acidic residues. The span at 404 to 421 (GDSPSPGSSSPLGAESSS) shows a compositional bias: low complexity. Phosphoserine is present on residues Ser-406, Ser-408, Ser-413, and Ser-573. In terms of domain architecture, PID spans 460–648 (LIDGIIFAAN…LLNTQDMYND (189 aa)). The segment at 631 to 648 (LSQKEYSDLLNTQDMYND) is autoinhibitory helix linker. 2 PDZ domains span residues 661–746 (DVFI…NIVR) and 752–828 (TVLI…MPAA).

Part of a multimeric complex containing STXBP1 and STX1A. Interacts with STXBP1. Component of the brain-specific heterotrimeric complex (LIN-10-LIN-2-LIN-7 complex) composed of at least APBA1, CASK, and LIN7, which associates with the motor protein KIF17 to transport vesicles along microtubules. Within the complex, interacts (via PDZ domain) with the motor protein KIF17; the interaction is direct and is required for association of KIF17 with the cargo that is to be transported. Binds to the cytoplasmic domain of amyloid protein (APP). Interacts (via PDZ 1 and 2 domains) with FSPB. Isoform 3 interacts (via its truncated PID domain) with active, GTP-bound RAB6A. Also interacts with GTP-bound RAB6B. Isoform 3 is expressed in brain.

Its subcellular location is the cytoplasm. It localises to the perinuclear region. The protein localises to the nucleus. The protein resides in the golgi apparatus. Functionally, putative function in synaptic vesicle exocytosis by binding to Munc18-1, an essential component of the synaptic vesicle exocytotic machinery. May modulate processing of the amyloid-beta precursor protein (APP) and hence formation of AAP-beta. Component of the LIN-10-LIN-2-LIN-7 complex, which associates with the motor protein KIF17 to transport vesicles containing N-methyl-D-aspartate (NMDA) receptor subunit NR2B along microtubules. In Mus musculus (Mouse), this protein is Amyloid-beta A4 precursor protein-binding family A member 1.